Consider the following 517-residue polypeptide: ATP synthase subunit alpha 2 (517 aa).

Position 173-180 (173-180 (GDRQTGKT)) interacts with ATP.

Belongs to the ATPase alpha/beta chains family. In terms of assembly, F-type ATPases have 2 components, CF(1) - the catalytic core - and CF(0) - the membrane proton channel. CF(1) has five subunits: alpha(3), beta(3), gamma(1), delta(1), epsilon(1). CF(0) has three main subunits: a(1), b(2) and c(9-12). The alpha and beta chains form an alternating ring which encloses part of the gamma chain. CF(1) is attached to CF(0) by a central stalk formed by the gamma and epsilon chains, while a peripheral stalk is formed by the delta and b chains.

It localises to the cell inner membrane. The catalysed reaction is ATP + H2O + 4 H(+)(in) = ADP + phosphate + 5 H(+)(out). Its function is as follows. Produces ATP from ADP in the presence of a proton gradient across the membrane. The alpha chain is a regulatory subunit. The polypeptide is ATP synthase subunit alpha 2 (Legionella pneumophila (strain Corby)).